Here is a 780-residue protein sequence, read N- to C-terminus: Cullin-1 (780 aa).

A Cullin neddylation domain is found at 710–771 (DRKSVISACI…EKEYMLRTEG (62 aa)). Lys-724 is covalently cross-linked (Glycyl lysine isopeptide (Lys-Gly) (interchain with G-Cter in NEDD8)).

Belongs to the cullin family. As to quaternary structure, component of an SCF (SKP1-CUL1-F-box protein) E3 ubiquitin ligase complex composed of cul-1, fsn-1, rpm-1 and skr-1. Interacts with Skp1-related proteins skr-1, skr-2, skr-3, skr-4, skr-7, skr-8, skr-9 and skr-10. In terms of processing, neddylated; which enhances the ubiquitination activity of SCF. As to expression, ubiquitous.

It is found in the cytoplasm. It functions in the pathway protein modification; protein ubiquitination. Its function is as follows. Probable core component of multiple cullin-RING-based SCF (SKP1-CUL1-F-box) E3 ubiquitin-protein ligase complexes which mediate the ubiquitination and subsequent proteasomal degradation of target proteins. As a scaffold protein may contribute to catalysis through positioning of the substrate and the ubiquitin-conjugating enzyme. Required for developmentally programmed transitions from the G1 phase of the cell cycle to the G0 phase or the apoptotic pathway. The polypeptide is Cullin-1 (cul-1) (Caenorhabditis elegans).